The primary structure comprises 456 residues: Adenylosuccinate lyase (456 aa).

N(6)-(1,2-dicarboxyethyl)-AMP contacts are provided by residues 15–16 (RY) and 90–92 (NHD). At lysine 94 the chain carries N6-acetyllysine. 122–123 (TS) is a binding site for N(6)-(1,2-dicarboxyethyl)-AMP. Histidine 171 acts as the Proton donor/acceptor in catalysis. Glutamine 247 is a binding site for N(6)-(1,2-dicarboxyethyl)-AMP. The active-site Proton donor/acceptor is serine 295. N(6)-(1,2-dicarboxyethyl)-AMP contacts are provided by residues serine 296, 301 to 303 (KVN), asparagine 309, arginine 335, and 340 to 344 (STVLR). Lysine 366 bears the N6-acetyllysine mark.

Belongs to the lyase 1 family. Adenylosuccinate lyase subfamily. In terms of assembly, homotetramer. Residues from neighboring subunits contribute catalytic and substrate-binding residues to each active site.

It catalyses the reaction N(6)-(1,2-dicarboxyethyl)-AMP = fumarate + AMP. The enzyme catalyses (2S)-2-[5-amino-1-(5-phospho-beta-D-ribosyl)imidazole-4-carboxamido]succinate = 5-amino-1-(5-phospho-beta-D-ribosyl)imidazole-4-carboxamide + fumarate. Its pathway is purine metabolism; AMP biosynthesis via de novo pathway; AMP from IMP: step 2/2. It functions in the pathway purine metabolism; IMP biosynthesis via de novo pathway; 5-amino-1-(5-phospho-D-ribosyl)imidazole-4-carboxamide from 5-amino-1-(5-phospho-D-ribosyl)imidazole-4-carboxylate: step 2/2. Functionally, catalyzes two reactions in de novo purine nucleotide biosynthesis. Catalyzes the breakdown of 5-aminoimidazole- (N-succinylocarboxamide) ribotide (SAICAR or 2-[5-amino-1-(5-phospho-beta-D-ribosyl)imidazole-4-carboxamido]succinate) to 5-aminoimidazole-4-carboxamide ribotide (AICAR or 5-amino-1-(5-phospho-beta-D-ribosyl)imidazole-4-carboxamide) and fumarate, and of adenylosuccinate (ADS or N(6)-(1,2-dicarboxyethyl)-AMP) to adenosine monophosphate (AMP) and fumarate. This chain is Adenylosuccinate lyase (purB), found in Escherichia coli O6:H1 (strain CFT073 / ATCC 700928 / UPEC).